Reading from the N-terminus, the 1286-residue chain is Lysine-specific demethylase JMJ705 (1286 aa).

In terms of domain architecture, JmjN spans 25 to 66 (APEFRPTAAEFADPVSYILKIEPAAAPYGICKVVPPLPPPPK). The tract at residues 82–105 (PDDRSPSFPTRHQQVGLCPRRTRP) is disordered. Positions 201–367 (ETAWNMRGVA…IAKEAAIRRA (167 aa)) constitute a JmjC domain. The Fe cation site is built by H244, E246, and H335. The span at 641–679 (PNSSNNVGCVGTKLSSSSTERQERPSSQNAHCNGSSVIS) shows a compositional bias: polar residues. Disordered stretches follow at residues 641 to 686 (PNSS…KGVR), 1013 to 1060 (AEPV…HSQE), and 1077 to 1164 (PAGT…PKQA). Positions 1119–1136 (HASGQKSNVQEANANSAS) are enriched in polar residues. A C2H2-type 1; degenerate zinc finger spans residues 1167 to 1189 (YSCDIEGCSMSFRTKRDLSLHKS). 3 consecutive C2H2-type zinc fingers follow at residues 1190 to 1214 (DICPVKGCGKKFFSHKYLLQHRKVH), 1220 to 1244 (LTCPWKGCNMAFKWPWARTEHLRVH), and 1250 to 1276 (YVCHEPGCAQTFRFVSDFSRHKRKTGH).

The cofactor is Fe(2+). As to expression, expressed in leaves and flag leaves. Expressed at low levels in roots, shoots, stems and panicles.

The protein localises to the nucleus. It catalyses the reaction N(6),N(6),N(6)-trimethyl-L-lysyl(27)-[histone H3] + 2 2-oxoglutarate + 2 O2 = N(6)-methyl-L-lysyl(27)-[histone H3] + 2 formaldehyde + 2 succinate + 2 CO2. Histone demethylase that demethylates 'Lys-27' (H3K27me) of histone H3 with a specific activity for H3K27me3 and H3K27me2. No activity on H3K4me3, H3K9me3, H3K27me1 and H3K36me3. Involved in biotic stress response. May demethylate H3K27me3-marked defense-related genes and increase their basal and induced expression levels during pathogen infection. In Oryza sativa subsp. japonica (Rice), this protein is Lysine-specific demethylase JMJ705 (JMJ705).